The following is a 139-amino-acid chain: Cytochrome c-type biogenesis protein CcmE (139 aa).

Topologically, residues 1–7 (MTKRQNR) are cytoplasmic. Residues 8 to 28 (MTLVALLVIGVSLTGYLGLKA) form a helical; Signal-anchor for type II membrane protein membrane-spanning segment. At 29–139 (FNENLLYFFS…ADALEKAKNK (111 aa)) the chain is on the periplasmic side. Residues H120 and Y124 each coordinate heme.

It belongs to the CcmE/CycJ family.

Its subcellular location is the cell inner membrane. Functionally, heme chaperone required for the biogenesis of c-type cytochromes. Transiently binds heme delivered by CcmC and transfers the heme to apo-cytochromes in a process facilitated by CcmF and CcmH. This Ruthia magnifica subsp. Calyptogena magnifica protein is Cytochrome c-type biogenesis protein CcmE.